The sequence spans 102 residues: Small ribosomal subunit protein uS10 (102 aa).

It belongs to the universal ribosomal protein uS10 family. In terms of assembly, part of the 30S ribosomal subunit.

Involved in the binding of tRNA to the ribosomes. The chain is Small ribosomal subunit protein uS10 from Methanocorpusculum labreanum (strain ATCC 43576 / DSM 4855 / Z).